The primary structure comprises 451 residues: Phosphoglucosamine mutase (451 aa).

The active-site Phosphoserine intermediate is the Ser-103. Ser-103, Asp-243, Asp-245, and Asp-247 together coordinate Mg(2+). Ser-103 bears the Phosphoserine mark.

This sequence belongs to the phosphohexose mutase family. The cofactor is Mg(2+). Activated by phosphorylation.

The enzyme catalyses alpha-D-glucosamine 1-phosphate = D-glucosamine 6-phosphate. In terms of biological role, catalyzes the conversion of glucosamine-6-phosphate to glucosamine-1-phosphate. The polypeptide is Phosphoglucosamine mutase (Lactobacillus johnsonii (strain CNCM I-12250 / La1 / NCC 533)).